The primary structure comprises 353 residues: Photosystem II D2 protein (353 aa).

Thr2 is modified (N-acetylthreonine). Thr2 is modified (phosphothreonine). The helical transmembrane segment at 41 to 61 (CAYFALGGWFTGTTFVTSWYT) threads the bilayer. His118 lines the chlorophyll a pocket. The chain crosses the membrane as a helical span at residues 125-141 (GFMLRQFELARSVQLRP). The pheophytin a site is built by Gln130 and Asn143. A helical membrane pass occupies residues 153–166 (VFVSVFLIYPLGQS). Residue His198 participates in chlorophyll a binding. A helical membrane pass occupies residues 208 to 228 (AALLCAIHGATVENTLFEDGD). A plastoquinone-binding residues include His215 and Phe262. His215 contacts Fe cation. Position 269 (His269) interacts with Fe cation. A helical transmembrane segment spans residues 279–295 (GLWMSAIGVVGLALNLR).

It belongs to the reaction center PufL/M/PsbA/D family. In terms of assembly, PSII is composed of 1 copy each of membrane proteins PsbA, PsbB, PsbC, PsbD, PsbE, PsbF, PsbH, PsbI, PsbJ, PsbK, PsbL, PsbM, PsbT, PsbX, PsbY, PsbZ, Psb30/Ycf12, at least 3 peripheral proteins of the oxygen-evolving complex and a large number of cofactors. It forms dimeric complexes. The cofactor is The D1/D2 heterodimer binds P680, chlorophylls that are the primary electron donor of PSII, and subsequent electron acceptors. It shares a non-heme iron and each subunit binds pheophytin, quinone, additional chlorophylls, carotenoids and lipids. There is also a Cl(-1) ion associated with D1 and D2, which is required for oxygen evolution. The PSII complex binds additional chlorophylls, carotenoids and specific lipids..

The protein localises to the plastid. It is found in the chloroplast thylakoid membrane. It carries out the reaction 2 a plastoquinone + 4 hnu + 2 H2O = 2 a plastoquinol + O2. In terms of biological role, photosystem II (PSII) is a light-driven water:plastoquinone oxidoreductase that uses light energy to abstract electrons from H(2)O, generating O(2) and a proton gradient subsequently used for ATP formation. It consists of a core antenna complex that captures photons, and an electron transfer chain that converts photonic excitation into a charge separation. The D1/D2 (PsbA/PsbD) reaction center heterodimer binds P680, the primary electron donor of PSII as well as several subsequent electron acceptors. D2 is needed for assembly of a stable PSII complex. The chain is Photosystem II D2 protein from Pinus thunbergii (Japanese black pine).